A 425-amino-acid chain; its full sequence is Serine--tRNA ligase (425 aa).

230–232 (TAE) is an L-serine binding site. 261-263 (RSE) lines the ATP pocket. Glu-284 is an L-serine binding site. 348–351 (EISS) contacts ATP. L-serine is bound at residue Ser-384.

It belongs to the class-II aminoacyl-tRNA synthetase family. Type-1 seryl-tRNA synthetase subfamily. In terms of assembly, homodimer. The tRNA molecule binds across the dimer.

The protein localises to the cytoplasm. It catalyses the reaction tRNA(Ser) + L-serine + ATP = L-seryl-tRNA(Ser) + AMP + diphosphate + H(+). The catalysed reaction is tRNA(Sec) + L-serine + ATP = L-seryl-tRNA(Sec) + AMP + diphosphate + H(+). It participates in aminoacyl-tRNA biosynthesis; selenocysteinyl-tRNA(Sec) biosynthesis; L-seryl-tRNA(Sec) from L-serine and tRNA(Sec): step 1/1. Functionally, catalyzes the attachment of serine to tRNA(Ser). Is also able to aminoacylate tRNA(Sec) with serine, to form the misacylated tRNA L-seryl-tRNA(Sec), which will be further converted into selenocysteinyl-tRNA(Sec). This Streptococcus pyogenes serotype M2 (strain MGAS10270) protein is Serine--tRNA ligase.